Reading from the N-terminus, the 598-residue chain is Peroxisomal multifunctional enzyme type 2 (598 aa).

Residues 1–309 (MSSSDGKLRY…LEVLEKLKEG (309 aa)) are (3R)-hydroxyacyl-CoA dehydrogenase. NAD(+) contacts are provided by residues 16–40 (VVTGAGAGLGREYALLFAERGAKVV), leucine 24, aspartate 43, 78–79 (SV), and asparagine 102. Residue serine 154 participates in substrate binding. Catalysis depends on tyrosine 167, which acts as the Proton acceptor. NAD(+)-binding positions include 167-171 (YTAAK) and 199-202 (AASR). The segment at 310-598 (GGDAIEDAFE…VDLKSSQAKL (289 aa)) is enoyl-CoA hydratase 2. (3R)-3-hydroxydecanoyl-CoA-binding positions include 390–391 (HG), lysine 419, 496–501 (DKNPLH), glycine 519, and phenylalanine 549. A MaoC-like domain is found at 469-586 (PAPNRQPDAT…VETGKEVISG (118 aa)). The short motif at 596-598 (AKL) is the Microbody targeting signal element.

It belongs to the short-chain dehydrogenases/reductases (SDR) family. In terms of assembly, homodimer.

The protein resides in the peroxisome. The enzyme catalyses a (3R)-3-hydroxyacyl-CoA + NAD(+) = a 3-oxoacyl-CoA + NADH + H(+). It catalyses the reaction a (3R)-3-hydroxyacyl-CoA = a (2E)-enoyl-CoA + H2O. It functions in the pathway lipid metabolism; fatty acid beta-oxidation. Its function is as follows. Bifunctional enzyme acting on the peroxisomal beta-oxidation pathway for fatty acids. The sequence is that of Peroxisomal multifunctional enzyme type 2 from Drosophila melanogaster (Fruit fly).